We begin with the raw amino-acid sequence, 232 residues long: RNA chaperone ProQ (232 aa).

Residues 105 to 182 (EAKARVQAQR…REEQHTPVSD (78 aa)) form a disordered region. The segment covering 117–136 (QQAKKREAAATAGEKEDAPR) has biased composition (basic and acidic residues). Over residues 137-146 (RERKPRPTTP) the composition is skewed to basic residues. Residues 147–177 (RRKEGAERKPRAQKPVEKAPKTVKAPREEQH) are compositionally biased toward basic and acidic residues.

The protein belongs to the ProQ family.

Its subcellular location is the cytoplasm. RNA chaperone with significant RNA binding, RNA strand exchange and RNA duplexing activities. May regulate ProP activity through an RNA-based, post-transcriptional mechanism. In Escherichia coli (strain K12), this protein is RNA chaperone ProQ.